The following is a 271-amino-acid chain: Phosphate import ATP-binding protein PstB 2 (271 aa).

Residues 1–20 (MLTKKPEINTILQTTPDPHS) form a disordered region. The region spanning 25-266 (MATEDLHVYY…PQEKQTEDYI (242 aa)) is the ABC transporter domain. ATP is bound at residue 57-64 (GPSGCGKS).

This sequence belongs to the ABC transporter superfamily. Phosphate importer (TC 3.A.1.7) family. The complex is composed of two ATP-binding proteins (PstB), two transmembrane proteins (PstC and PstA) and a solute-binding protein (PstS).

The protein resides in the cell membrane. The catalysed reaction is phosphate(out) + ATP + H2O = ADP + 2 phosphate(in) + H(+). Part of the ABC transporter complex PstSACB involved in phosphate import. Responsible for energy coupling to the transport system. The polypeptide is Phosphate import ATP-binding protein PstB 2 (Listeria innocua serovar 6a (strain ATCC BAA-680 / CLIP 11262)).